We begin with the raw amino-acid sequence, 418 residues long: CinA-like protein (418 aa).

Belongs to the CinA family.

This chain is CinA-like protein, found in Leptospira borgpetersenii serovar Hardjo-bovis (strain L550).